Here is a 394-residue protein sequence, read N- to C-terminus: Elongation factor Tu (394 aa).

In terms of domain architecture, tr-type G spans 10–204 (KPHVNIGTIG…AVDSYIPQPV (195 aa)). The segment at 19–26 (GHVDHGKT) is G1. GTP is bound at residue 19 to 26 (GHVDHGKT). Thr26 provides a ligand contact to Mg(2+). The G2 stretch occupies residues 60–64 (GITIS). The interval 81 to 84 (DCPG) is G3. Residues 81 to 85 (DCPGH) and 136 to 139 (NKID) each bind GTP. The G4 stretch occupies residues 136-139 (NKID). Residues 174–176 (SAL) are G5.

This sequence belongs to the TRAFAC class translation factor GTPase superfamily. Classic translation factor GTPase family. EF-Tu/EF-1A subfamily. In terms of assembly, monomer.

It is found in the cytoplasm. The catalysed reaction is GTP + H2O = GDP + phosphate + H(+). GTP hydrolase that promotes the GTP-dependent binding of aminoacyl-tRNA to the A-site of ribosomes during protein biosynthesis. In Rickettsia rickettsii, this protein is Elongation factor Tu.